The chain runs to 345 residues: G-protein coupled receptor family C group 5 member D (345 aa).

Residues 1 to 27 (MYKDCIESTGDYFLLCDAEGPWGIILE) lie on the Extracellular side of the membrane. A helical membrane pass occupies residues 28–48 (SLAILGIVVTILLLLAFLFLM). Residues 49–63 (RKIQDCSQWNVLPTQ) lie on the Cytoplasmic side of the membrane. The helical transmembrane segment at 64–84 (LLFLLSVLGLFGLAFAFIIEL) threads the bilayer. At 85–93 (NQQTAPVRY) the chain is on the extracellular side. Residues 94-114 (FLFGVLFALCFSCLLAHASNL) traverse the membrane as a helical segment. Topologically, residues 115–123 (VKLVRGCVS) are cytoplasmic. The helical transmembrane segment at 124 to 144 (FSWTTILCIAIGCSLLQIIIA) threads the bilayer. Over 145–167 (TEYVTLIMTRGMMFVNMTPCQLN) the chain is Extracellular. Residues 168-188 (VDFVVLLVYVLFLMALTFFVS) traverse the membrane as a helical segment. Over 189 to 204 (KATFCGPCENWKQHGR) the chain is Cytoplasmic. Residues 205–225 (LIFITVLFSIIIWVVWISMLL) traverse the membrane as a helical segment. At 226–239 (RGNPQFQRQPQWDD) the chain is on the extracellular side. A helical transmembrane segment spans residues 240-260 (PVVCIALVTNAWVFLLLYIVP). Over 261–345 (ELCILYRSCR…LSPQQDAGGV (85 aa)) the chain is Cytoplasmic.

Belongs to the G-protein coupled receptor 3 family. Homodimer. Widely expressed in the peripheral system. Expression pattern is high in pancreas, medium in kidney, small intestine, spleen and testis, low in lung, colon, leukocyte, prostate and thymus and not detectable in brain, heart, liver, placenta, skeletal muscle and ovary.

The protein localises to the cell membrane. G-protein coupled receptor involved in hard keratin expression and likely plays a role in the development of hair and nails. In Homo sapiens (Human), this protein is G-protein coupled receptor family C group 5 member D (GPRC5D).